We begin with the raw amino-acid sequence, 894 residues long: E3 ubiquitin-protein ligase SH3RF1 (894 aa).

Residues 12 to 53 form an RING-type zinc finger; that stretch reads CPVCLERLDASAKVLPCQHTFCKRCLLGIVGSRNELRCPECR. SH3 domains are found at residues 134-193 and 196-259; these read PQLP…IIKP and QPPP…FNSA. The segment at 274–323 is disordered; that stretch reads VDTAECPSATAAQSSSASKHSDTKKNTRKRHSFTSLTMANKSSQASQNRH. Over residues 281–291 the composition is skewed to low complexity; the sequence is SATAAQSSSAS. The segment at 293–363 is interaction with RAC1; sequence HSDTKKNTRK…APSQVHISTT (71 aa). The residue at position 305 (Ser305) is a Phosphoserine. Positions 306-322 are enriched in polar residues; that stretch reads FTSLTMANKSSQASQNR. The interval 448–551 is interaction with AKT2; it reads HLRPQTRPSV…STAGGPAQKP (104 aa). Residues 453–514 enclose the SH3 3 domain; that stretch reads TRPSVYVAIY…PGNYVAPVTR (62 aa). Disordered regions lie at residues 526–556 and 682–751; these read MSTA…GNGV and LETE…PTLD. Phosphoserine is present on Ser540. The segment covering 700–713 has biased composition (polar residues); the sequence is SPESAASACGNSSA. Residues 715 to 726 show a composition bias toward basic and acidic residues; sequence KPDKDSKKEKKG. Phosphoserine is present on Ser743. The region spanning 835 to 894 is the SH3 4 domain; it reads VVCERHRVVVSYPPQSEAELELKEGDIVFVHKKREDGWFKGTLQRNGKTGLFPGSFVENI.

This sequence belongs to the SH3RF family. Interacts with HERP1. Interacts with RAC1; in a GTP-dependent manner. Interacts with MAP3K10/MLK2 and MAP3K11/MLK3. Interacts with MAPK8IP; this interaction leads to the PJAC complex (POSH-JIP or SH3RF1/MAPK8IP apoptotic complex) with a 1:1 ratio. Interacts with SIAH1. Probably part of a signaling complex that may contain SH3RF1, MAPK8IP, DLK1, MAP2K4/MKK4, MAP2K7/MKK7, MAPK8/JNK1, MAPK9/JNK2, AKT1 and AKT2. Found in a complex with RAC2, MAP3K7/TAK1, MAP2K7/MKK7, MAPK8IP1/JIP1, MAPK8/JNK1 and MAPK9/JNK2. Found in a complex with RAC1, MAP3K11/MLK3, MAP2K7/MKK7, MAPK8IP1/JIP1 and MAPK8/JNK1. Interacts with SH3RF2. Post-translationally, phosphorylated at Ser-305 by AKT1 and AKT2. When phosphorylated, it has reduced ability to bind Rac. Autoubiquitinated. Ubiquitinated by SH3RF2, leading to proteasome-mediated degradation.

Its subcellular location is the cytoplasm. It is found in the perinuclear region. It localises to the cell projection. The protein localises to the lamellipodium. The protein resides in the golgi apparatus. Its subcellular location is the trans-Golgi network. It catalyses the reaction S-ubiquitinyl-[E2 ubiquitin-conjugating enzyme]-L-cysteine + [acceptor protein]-L-lysine = [E2 ubiquitin-conjugating enzyme]-L-cysteine + N(6)-ubiquitinyl-[acceptor protein]-L-lysine.. It functions in the pathway protein modification; protein ubiquitination. Has E3 ubiquitin-protein ligase activity. In the absence of an external substrate, it can catalyze self-ubiquitination. Stimulates ubiquitination of potassium channel KCNJ1, enhancing it's dynamin-dependent and clathrin-independent endocytosis. Acts as a scaffold protein that coordinates with MAPK8IP1/JIP1 in organizing different components of the JNK pathway, including RAC1 or RAC2, MAP3K11/MLK3 or MAP3K7/TAK1, MAP2K7/MKK7, MAPK8/JNK1 and/or MAPK9/JNK2 into a functional multiprotein complex to ensure the effective activation of the JNK signaling pathway. Regulates the differentiation of CD4(+) and CD8(+) T-cells and promotes T-helper 1 (Th1) cell differentiation. Regulates the activation of MAPK8/JNK1 and MAPK9/JNK2 in CD4(+) T-cells and the activation of MAPK8/JNK1 in CD8(+) T-cells. Plays a crucial role in the migration of neocortical neurons in the developing brain. Controls proper cortical neuronal migration and the formation of proximal cytoplasmic dilation in the leading process (PCDLP) in migratory neocortical neurons by regulating the proper localization of activated RAC1 and F-actin assembly. The sequence is that of E3 ubiquitin-protein ligase SH3RF1 (Sh3rf1) from Rattus norvegicus (Rat).